The chain runs to 211 residues: 3-demethoxyubiquinol 3-hydroxylase (211 aa).

Fe cation is bound by residues E60, E90, H93, E142, E174, and H177.

It belongs to the COQ7 family. Fe cation serves as cofactor.

It localises to the cell membrane. The enzyme catalyses a 5-methoxy-2-methyl-3-(all-trans-polyprenyl)benzene-1,4-diol + AH2 + O2 = a 3-demethylubiquinol + A + H2O. It participates in cofactor biosynthesis; ubiquinone biosynthesis. Functionally, catalyzes the hydroxylation of 2-nonaprenyl-3-methyl-6-methoxy-1,4-benzoquinol during ubiquinone biosynthesis. The polypeptide is 3-demethoxyubiquinol 3-hydroxylase (Francisella tularensis subsp. tularensis (strain FSC 198)).